The primary structure comprises 215 residues: Vesicle-trafficking protein SEC22b (215 aa).

Residues 1 to 194 (MVLLTMIARV…KYLNMRSTYA (194 aa)) are Cytoplasmic-facing. Residues 6–119 (MIARVADGLP…YSFIEFDTFI (114 aa)) form the Longin domain. N6-acetyllysine is present on lysine 38. In terms of domain architecture, v-SNARE coiled-coil homology spans 134–194 (NLGSINTELQ…KYLNMRSTYA (61 aa)). Serine 137 is subject to Phosphoserine. Threonine 140 is modified (phosphothreonine). Phosphoserine occurs at positions 164, 168, 174, and 177. A helical; Anchor for type IV membrane protein membrane pass occupies residues 195–215 (KLAAVAVFFIMLIVYVRFWWL).

The protein belongs to the synaptobrevin family. In terms of assembly, interacts with STX17. Component of two distinct SNARE complexes consisting of STX5, GOSR2/BOS1, BET1 and SEC22B or STX18, USE1L, BNIP1/SEC20L and SEC22B. YKT6 can probably replace SEC22B as subunit of either complex. Interacts with the COPII Sec23/24 complex composed of SEC23A and SEC24A; recruits SEC22B into COPII-coated vesicles to allow its transport from the endoplasmic reticulum to the Golgi. Interacts with BET1.

Its subcellular location is the endoplasmic reticulum membrane. It localises to the endoplasmic reticulum-Golgi intermediate compartment membrane. The protein localises to the golgi apparatus. The protein resides in the cis-Golgi network membrane. It is found in the trans-Golgi network membrane. Its subcellular location is the melanosome. Functionally, SNARE involved in targeting and fusion of ER-derived transport vesicles with the Golgi complex as well as Golgi-derived retrograde transport vesicles with the ER. The sequence is that of Vesicle-trafficking protein SEC22b (Sec22b) from Cricetulus griseus (Chinese hamster).